Here is an 85-residue protein sequence, read N- to C-terminus: UPF0297 protein CLL_A1175 (85 aa).

Belongs to the UPF0297 family.

This is UPF0297 protein CLL_A1175 from Clostridium botulinum (strain Eklund 17B / Type B).